We begin with the raw amino-acid sequence, 208 residues long: MKLQVLDTKGNEIKEIALNDYVWGIEPHQQAIYDTVISQQAALRQGTKKVKTRAEVSGGGRKPWKQKGTGRARQGSIRAPQWKGGGVTFGPTPDINYKKSVNKKVRALAFRSVLSLKVKENNLVIVDKFDFAKPSTKEMVVVMKNLKIDDQKTLIVTKEKEELVVKSSNNITGVKTISANQLNVFDLLNATKLLITEEAAIAVEEVYA.

The segment at V50–K83 is disordered.

This sequence belongs to the universal ribosomal protein uL4 family. In terms of assembly, part of the 50S ribosomal subunit.

One of the primary rRNA binding proteins, this protein initially binds near the 5'-end of the 23S rRNA. It is important during the early stages of 50S assembly. It makes multiple contacts with different domains of the 23S rRNA in the assembled 50S subunit and ribosome. In terms of biological role, forms part of the polypeptide exit tunnel. The chain is Large ribosomal subunit protein uL4 from Mycoplasma capricolum subsp. capricolum (strain California kid / ATCC 27343 / NCTC 10154).